A 1308-amino-acid chain; its full sequence is Spermatogenesis-associated protein 31F1B (1308 aa).

Residues 7–27 traverse the membrane as a helical segment; sequence FLWDTECPLYVYFCFFIIVLI. 7 disordered regions span residues 464–488, 627–648, 844–863, 902–927, 1005–1026, 1084–1190, and 1204–1254; these read SPPIPLPEAAPPPSSTSPNESLDEP, SQPGKPEAYGSGDTFLPTAGKG, HGAQGHGRTEKVPPERQPLL, PTATDLESESVQEPLGSPRESTLLQG, FSTESQSPGKSKSGYVPTVAGK, GACP…AGLK, and MKSK…PKAQ. The span at 465–478 shows a compositional bias: pro residues; sequence PPIPLPEAAPPPSS. Acidic residues predominate over residues 1107–1117; that stretch reads METDSEQDMED.

Belongs to the SPATA31 family.

The protein localises to the membrane. This chain is Spermatogenesis-associated protein 31F1B, found in Mus musculus (Mouse).